Here is a 297-residue protein sequence, read N- to C-terminus: MNINQEQLLMFQAVMETGSFSAAARKLGKVPSAVSMSIANLEIDLNLTLFERKGREPTPTAEARVLYEKTAQLLIEMNQWKQHAHALSTGLEPNLTIVVVSELLHTNWTDYVCLLESRFPDLQINIVSAPQEDALQMLLDGSAQLALMFEREHLDNREQFVELKREALIPVISKTHPLASQEHVSYEQILGTRQIVVASRDETLKPELLFSKHYWRTDNHHSACLMILRNLGWGVLPQEMFKENPELNNKLKALDVFDFTPRFEYYVDLVWSRESELGAAARFLIDYIRNKRMQPAP.

The HTH lysR-type domain occupies 1 to 60 (MNINQEQLLMFQAVMETGSFSAAARKLGKVPSAVSMSIANLEIDLNLTLFERKGREPTPT). A DNA-binding region (H-T-H motif) is located at residues 20–39 (FSAAARKLGKVPSAVSMSIA).

This sequence belongs to the LysR transcriptional regulatory family. As to quaternary structure, homodimer and homotetramer. Binding of chlorhexidine at the inducer-binding domain causes a quaternary structural change that favors interactions between dimers to form tetramers.

It localises to the cytoplasm. Its function is as follows. Regulates the expression of the AceI transporter. Binds DNA and chlorhexidine. Binds to regulatory sites within the intergenic region between the aceI and aceR genes, and affects the interaction between RNA polymerase (RNAP) and promoter DNA both in the presence and in the absence of chlorhexidine. In the absence of chlorhexidine, prevents transcription of the aceI gene by disrupting interactions between the promoter DNA and RNAP. In the presence of chlorhexidine, activates expression of aceI. When AceR interacts with chlorhexidine, it undergoes a conformational change and the tetrameric form either releases the DNA or shifts the position of the DNA-binding region to allow RNAP to bind onto the promoter DNA to proceed with aceI transcription. This chain is HTH-type transcriptional regulator AceR, found in Acinetobacter baumannii (strain ATCC 17978 / DSM 105126 / CIP 53.77 / LMG 1025 / NCDC KC755 / 5377).